The following is a 177-amino-acid chain: MDAPIDQPVLGSRRLSNYLVALLVSIGGVGFLLTSASSYFGRDFLPIGHPAELIWVPQGLVMGAYGVGAVLLSSYLWAVIAIDVGGGRNLFDRGADTITIERRGFRRLISFTLPCGDVQAVKVEVRDGLNPRRRLALRLRGRRDVPLTRVGEPIALAELERSGAELARYLNVPLEGV.

2 consecutive transmembrane segments (helical) span residues 20-40 (VALL…SSYF) and 60-80 (LVMG…WAVI).

It belongs to the Ycf4 family.

The protein resides in the cellular thylakoid membrane. Seems to be required for the assembly of the photosystem I complex. This Synechococcus sp. (strain RCC307) protein is Photosystem I assembly protein Ycf4.